The chain runs to 404 residues: Argininosuccinate synthase (404 aa).

ATP is bound by residues 10–18 and Ala37; that span reads AYSGGLDTS. L-citrulline contacts are provided by Tyr90 and Ser95. An ATP-binding site is contributed by Gly120. Positions 122, 126, and 127 each coordinate L-aspartate. Residue Asn126 participates in L-citrulline binding. Residues Arg130, Ser181, Ser190, Glu266, and Tyr278 each contribute to the L-citrulline site. The tract at residues 173-200 is disordered; it reads DKRGESPFSTDANLLHTSSEGKVLEDPW. The segment covering 179–192 has biased composition (polar residues); that stretch reads PFSTDANLLHTSSE.

The protein belongs to the argininosuccinate synthase family. Type 1 subfamily. Homotetramer.

The protein resides in the cytoplasm. It carries out the reaction L-citrulline + L-aspartate + ATP = 2-(N(omega)-L-arginino)succinate + AMP + diphosphate + H(+). The protein operates within amino-acid biosynthesis; L-arginine biosynthesis; L-arginine from L-ornithine and carbamoyl phosphate: step 2/3. The chain is Argininosuccinate synthase from Novosphingobium aromaticivorans (strain ATCC 700278 / DSM 12444 / CCUG 56034 / CIP 105152 / NBRC 16084 / F199).